Here is an 865-residue protein sequence, read N- to C-terminus: MPMSQPAAPPVLTVRYEGSERTFAAGHDVVVGRDLRADVRVAHPLISRAHLLLRFDQGRWVAIDNGSLNGLYLNNRRVPVVDIYDAQRVHIGNPDGPALDFEVGRHRGSAGRPPQTTSIRLPNLSAGAWPTDGPPQTGTLGSGQLQQLPPATTRIPAAPPSGPQPRYPTGGQQLWPPSGPQRAPQIYRPPTAAPPPAGARGGTEAGNLATSMMKILRPGRLTGELPPGAVRIGRANDNDIVIPEVLASRHHATLVPTPGGTEIRDNRSINGTFVNGARVDAALLHDGDVVTIGNIDLVFADGTLARREENLLETRVGGLDVRGVTWTIDGDKTLLDGISLTARPGMLTAVIGPSGAGKSTLARLVAGYTHPTDGTVTFEGHNVHAEYASLRSRIGMVPQDDVVHGQLTVKHALMYAAELRLPPDTTKDDRTQVVARVLEELEMSKHIDTRVDKLSGGQRKRASVALELLTGPSLLILDEPTSGLDPALDRQVMTMLRQLADAGRVVLVVTHSLTYLDVCDQVLLLAPGGKTAFCGPPTQIGPVMGTTNWADIFSTVADDPDAAKARYLARTGPTPPPPPVEQPAELGDPAHTSLFRQFSTIARRQLRLIVSDRGYFVFLALLPFIMGALSMSVPGDVGFGFPNPMGDAPNEPGQILVLLNVGAVFMGTALTIRDLIGERAIFRREQAVGLSTTAYLIAKVCVYTVLAVVQSAIVTVIVLVGKGGPTQGAVALSKPDLELFVDVAVTCVASAMLGLALSAIAKSNEQIMPLLVVAVMSQLVFSGGMIPVTGRVPLDQMSWVTPARWGFAASAATVDLIKLVPGPLTPKDSHWHHTASAWWFDMAMLVALSVIYVGFVRWKIRLKAC.

Residues 29 to 78 enclose the FHA 1 domain; sequence VVVGRDLRADVRVAHPLISRAHLLLRFDQGRWVAIDNGSLNGLYLNNRRV. The segment at 104–205 is disordered; the sequence is GRHRGSAGRP…PAGARGGTEA (102 aa). Residues 135 to 156 show a composition bias toward low complexity; that stretch reads PQTGTLGSGQLQQLPPATTRIP. Threonine 152 bears the Phosphothreonine mark. A compositionally biased stretch (pro residues) spans 157-166; sequence AAPPSGPQPR. The residue at position 210 (threonine 210) is a Phosphothreonine. The 50-residue stretch at 230–279 folds into the FHA 2 domain; the sequence is VRIGRANDNDIVIPEVLASRHHATLVPTPGGTEIRDNRSINGTFVNGARV. The ABC transporter domain maps to 319–552; the sequence is LDVRGVTWTI…VMGTTNWADI (234 aa). 352 to 359 lines the ATP pocket; that stretch reads GPSGAGKS. The ABC transmembrane type-2 domain occupies 596 to 810; sequence RQFSTIARRQ…TPARWGFAAS (215 aa). Transmembrane regions (helical) follow at residues 614 to 634, 652 to 672, 700 to 720, 740 to 760, 767 to 787, and 836 to 856; these read GYFV…MSVP, PGQI…ALTI, VCVY…IVLV, FVDV…LSAI, IMPL…GMIP, and SAWW…VGFV.

It in the central section; belongs to the ABC transporter superfamily. In the C-terminal section; belongs to the ABC-2 integral membrane protein family. Homodimer. Interacts with PknF. Phosphorylated by PknF. Can probably be phosphorylated in vivo by other kinases when PknF is missing.

Its subcellular location is the cell membrane. With respect to regulation, function is positively regulated by phosphorylation. In terms of biological role, involved in the translocation of an unknown substrate across the membrane. Transmembrane domains (TMD) form a pore in the membrane and the ATP-binding domain (NBD) is responsible for energy generation. Required for virulence. This is ABC transporter ATP-binding/permease protein Rv1747 from Mycobacterium tuberculosis (strain ATCC 25618 / H37Rv).